The chain runs to 141 residues: Zinc finger HIT domain-containing protein 3 (141 aa).

Residues 1–28 (LEKPKYRCPACRVPYCSVACFRKHKEQC) form an HIT-type; degenerate zinc finger. Zn(2+) is bound by residues Cys8, Cys11, His24, and Cys28. Ser66 is subject to Phosphoserine.

As to quaternary structure, thyroid receptor interacting proteins (TRIPs) specifically interact with the ligand binding domain of the thyroid receptor (TR). Requires the presence of thyroid hormone for its interaction. Interacts with NUFIP1. Interacts (via HIT-type zinc finger) with the RUVBL1/RUVBL2 complex in the presence of ADP.

It is found in the cytoplasm. It localises to the nucleus. This is Zinc finger HIT domain-containing protein 3 (ZNHIT3) from Pan troglodytes (Chimpanzee).